The chain runs to 417 residues: Phosphoglycerate kinase 2 (417 aa).

S4 is subject to Phosphoserine. N6-acetyllysine is present on K11. The (2R)-3-phosphoglycerate site is built by V23, D24, F25, N26, Q38, and R39. At K48 the chain carries N6-acetyllysine. (2R)-3-phosphoglycerate contacts are provided by S62, H63, G65, and R66. An N6-acetyllysine mark is found at K75, K86, and K97. Residues L122 and R123 each coordinate (2R)-3-phosphoglycerate. An N6-acetyllysine mark is found at K131 and K146. The (2R)-3-phosphoglycerate site is built by H170 and R171. The residue at position 196 (Y196) is a Phosphotyrosine. An N6-acetyllysine modification is found at K199. G214 lines the ADP pocket. G214 provides a ligand contact to CDP. 2 residues coordinate AMP: A215 and K216. Residue A215 coordinates ATP. Residue A215 coordinates Mg(2+). D219 provides a ligand contact to CDP. D219 serves as a coordination point for Mg(2+). K220 contacts AMP. K220 lines the ATP pocket. ADP is bound at residue G238. G238 is a CDP binding site. G239 provides a ligand contact to AMP. G239 lines the ATP pocket. N6-acetyllysine occurs at positions 267 and 291. G313 contributes to the AMP binding site. G313 provides a ligand contact to ATP. CDP-binding residues include G338, I340, and F343. ADP is bound at residue F343. Position 344 (E344) interacts with AMP. Residues E344, D375, and T376 each contribute to the ATP site. D375 is a binding site for Mg(2+).

It belongs to the phosphoglycerate kinase family. In terms of assembly, monomer. Requires Mg(2+) as cofactor. As to expression, testis and sperm. Localized on the principle piece in the sperm (at protein level). Testis-specific.

The protein resides in the cytoplasm. It catalyses the reaction (2R)-3-phosphoglycerate + ATP = (2R)-3-phospho-glyceroyl phosphate + ADP. It functions in the pathway carbohydrate degradation; glycolysis; pyruvate from D-glyceraldehyde 3-phosphate: step 2/5. Functionally, essential for sperm motility and male fertility but is not required for the completion of spermatogenesis. In Mus musculus (Mouse), this protein is Phosphoglycerate kinase 2 (Pgk2).